Consider the following 77-residue polypeptide: Acyl carrier protein (77 aa).

In terms of domain architecture, Carrier spans 2 to 77; it reads ADTLERVTKI…DAVNYIQNQQ (76 aa). Serine 37 bears the O-(pantetheine 4'-phosphoryl)serine mark.

This sequence belongs to the acyl carrier protein (ACP) family. Post-translationally, 4'-phosphopantetheine is transferred from CoA to a specific serine of apo-ACP by AcpS. This modification is essential for activity because fatty acids are bound in thioester linkage to the sulfhydryl of the prosthetic group.

The protein localises to the cytoplasm. It functions in the pathway lipid metabolism; fatty acid biosynthesis. Functionally, carrier of the growing fatty acid chain in fatty acid biosynthesis. This chain is Acyl carrier protein (acpA), found in Bacillus subtilis (strain 168).